The sequence spans 364 residues: Nucleoporin SEH1 (364 aa).

WD repeat units follow at residues 10 to 49 (DHKD…EWNC), 55 to 96 (THSG…SNDK), 111 to 152 (DSRT…NLSQ), 160 to 210 (SCKL…RKYA), 217 to 258 (TVTD…KESS), and 275 to 314 (GHNS…NWKC). The tract at residues 326 to 364 (NGAAGQAGTPGAAGTPGGPASQNALQAVAGRKKAQLMPG) is disordered. Residues 327–338 (GAAGQAGTPGAA) are compositionally biased toward low complexity. Positions 355 to 364 (GRKKAQLMPG) are enriched in basic residues.

Belongs to the WD repeat SEC13 family. In terms of assembly, component of the Nup107-160 subcomplex of the nuclear pore complex (NPC). The Nup107-160 subcomplex includes NUP160, NUP133, NUP107, NUP98, NUP85, NUP43, NUP37, SEH1 and SEC13. Component of the GATOR2 subcomplex, composed of MIOS, SEC13, SEH1L, WDR24 and WDR59. The GATOR2 complex interacts with CASTOR1 and CASTOR2; the interaction is negatively regulated by arginine. The GATOR2 complex interacts with SESN1, SESN2 and SESN3; the interaction is negatively regulated by amino acids.

It localises to the chromosome. The protein localises to the centromere. The protein resides in the kinetochore. Its subcellular location is the nucleus. It is found in the nuclear pore complex. It localises to the lysosome membrane. With respect to regulation, the GATOR2 complex is negatively regulated by the upstream amino acid sensors CASTOR1 and SESN2, which sequester the GATOR2 complex in absence of amino acids. In the presence of abundant amino acids, GATOR2 is released from CASTOR1 and SESN2 and activated. In terms of biological role, component of the Nup107-160 subcomplex of the nuclear pore complex (NPC). The Nup107-160 subcomplex is required for the assembly of a functional NPC. The Nup107-160 subcomplex is also required for normal kinetochore microtubule attachment, mitotic progression and chromosome segregation. This subunit plays a role in recruitment of the Nup107-160 subcomplex to the kinetochore. As a component of the GATOR2 complex, functions as an activator of the amino acid-sensing branch of the mTORC1 signaling pathway. The GATOR2 complex indirectly activates mTORC1 through the inhibition of the GATOR1 subcomplex. GATOR2 probably acts as an E3 ubiquitin-protein ligase toward GATOR1. In the presence of abundant amino acids, the GATOR2 complex mediates ubiquitination of the NPRL2 core component of the GATOR1 complex, leading to GATOR1 inactivation. In the absence of amino acids, GATOR2 is inhibited, activating the GATOR1 complex. The polypeptide is Nucleoporin SEH1 (seh1l) (Osmerus mordax (Rainbow smelt)).